Consider the following 359-residue polypeptide: Protein RecA (359 aa).

Position 69–76 (69–76 (GPESSGKT)) interacts with ATP. Residues 337-359 (SANSVAKASEEDEEEEVDLEPEE) are disordered. Over residues 346 to 359 (EEDEEEEVDLEPEE) the composition is skewed to acidic residues.

It belongs to the RecA family.

Its subcellular location is the cytoplasm. Functionally, can catalyze the hydrolysis of ATP in the presence of single-stranded DNA, the ATP-dependent uptake of single-stranded DNA by duplex DNA, and the ATP-dependent hybridization of homologous single-stranded DNAs. It interacts with LexA causing its activation and leading to its autocatalytic cleavage. This is Protein RecA from Nostoc punctiforme (strain ATCC 29133 / PCC 73102).